We begin with the raw amino-acid sequence, 347 residues long: Ribosomal RNA small subunit methyltransferase C (347 aa).

It belongs to the methyltransferase superfamily. RsmC family. As to quaternary structure, monomer.

It localises to the cytoplasm. It catalyses the reaction guanosine(1207) in 16S rRNA + S-adenosyl-L-methionine = N(2)-methylguanosine(1207) in 16S rRNA + S-adenosyl-L-homocysteine + H(+). Specifically methylates the guanine in position 1207 of 16S rRNA in the 30S particle. This is Ribosomal RNA small subunit methyltransferase C from Yersinia pseudotuberculosis serotype O:1b (strain IP 31758).